A 242-amino-acid polypeptide reads, in one-letter code: Biosynthetic peptidoglycan transglycosylase (242 aa).

The helical transmembrane segment at leucine 19–valine 39 threads the bilayer.

Belongs to the glycosyltransferase 51 family.

It localises to the cell inner membrane. It catalyses the reaction [GlcNAc-(1-&gt;4)-Mur2Ac(oyl-L-Ala-gamma-D-Glu-L-Lys-D-Ala-D-Ala)](n)-di-trans,octa-cis-undecaprenyl diphosphate + beta-D-GlcNAc-(1-&gt;4)-Mur2Ac(oyl-L-Ala-gamma-D-Glu-L-Lys-D-Ala-D-Ala)-di-trans,octa-cis-undecaprenyl diphosphate = [GlcNAc-(1-&gt;4)-Mur2Ac(oyl-L-Ala-gamma-D-Glu-L-Lys-D-Ala-D-Ala)](n+1)-di-trans,octa-cis-undecaprenyl diphosphate + di-trans,octa-cis-undecaprenyl diphosphate + H(+). The protein operates within cell wall biogenesis; peptidoglycan biosynthesis. Functionally, peptidoglycan polymerase that catalyzes glycan chain elongation from lipid-linked precursors. The sequence is that of Biosynthetic peptidoglycan transglycosylase from Escherichia coli O81 (strain ED1a).